A 155-amino-acid chain; its full sequence is Transcriptional repressor NrdR (155 aa).

A zinc finger spans residues 3–34 (CPFCQHDDTQVLDTRVSEEGDSIRRRRRCTSC). An ATP-cone domain is found at 49–139 (PVVVKKNGSR…VYKSFEDVAE (91 aa)).

This sequence belongs to the NrdR family. Requires Zn(2+) as cofactor.

Its function is as follows. Negatively regulates transcription of bacterial ribonucleotide reductase nrd genes and operons by binding to NrdR-boxes. The sequence is that of Transcriptional repressor NrdR from Janthinobacterium sp. (strain Marseille) (Minibacterium massiliensis).